We begin with the raw amino-acid sequence, 862 residues long: Kinesin-like protein KIN-7J (862 aa).

One can recognise a Kinesin motor domain in the interval R9–V331. G95–T102 provides a ligand contact to ATP. A coiled-coil region spans residues V340–D415. Basic and acidic residues-rich tracts occupy residues E475 to Q499 and P518 to E531. 2 disordered regions span residues E475–S532 and D596–N643. Residues S598–Y610 are compositionally biased toward polar residues. Basic and acidic residues predominate over residues R613–D629.

The protein belongs to the TRAFAC class myosin-kinesin ATPase superfamily. Kinesin family. KIN-7 subfamily.

This Oryza sativa subsp. japonica (Rice) protein is Kinesin-like protein KIN-7J.